The chain runs to 108 residues: UPF0060 membrane protein SAR2425 (108 aa).

4 helical membrane passes run 5 to 25, 31 to 51, 60 to 80, and 86 to 106; these read IFIFILAGLCEIGGGYLIWLW, SSLVGLIGGVILMLYGVIATF, VYAAYGGVFIIMSLIFAMVVD, and KYDVIGAIICIVGVLVMLLPS.

The protein belongs to the UPF0060 family.

The protein localises to the cell membrane. The chain is UPF0060 membrane protein SAR2425 from Staphylococcus aureus (strain MRSA252).